Reading from the N-terminus, the 266-residue chain is Regulatory protein RecX (266 aa).

This sequence belongs to the RecX family.

The protein localises to the cytoplasm. Modulates RecA activity. This Levilactobacillus brevis (strain ATCC 367 / BCRC 12310 / CIP 105137 / JCM 1170 / LMG 11437 / NCIMB 947 / NCTC 947) (Lactobacillus brevis) protein is Regulatory protein RecX.